We begin with the raw amino-acid sequence, 208 residues long: Large ribosomal subunit protein uL3 (208 aa).

A disordered region spans residues 116-146 (GFQGAIKRHGQSRGPMAHGSRYHRRPGSMGP).

It belongs to the universal ribosomal protein uL3 family. As to quaternary structure, part of the 50S ribosomal subunit. Forms a cluster with proteins L14 and L19.

Functionally, one of the primary rRNA binding proteins, it binds directly near the 3'-end of the 23S rRNA, where it nucleates assembly of the 50S subunit. This Streptococcus mutans serotype c (strain ATCC 700610 / UA159) protein is Large ribosomal subunit protein uL3.